Reading from the N-terminus, the 164-residue chain is Lipoprotein signal peptidase (164 aa).

The next 4 membrane-spanning stretches (helical) occupy residues 2–22, 40–60, 70–90, and 99–119; these read MSLL…AIVL, VVIT…AFSF, WLFS…MAKA, and LAYS…VVYG. Residues Asp-123 and Asp-142 contribute to the active site. Residues 138–158 form a helical membrane-spanning segment; that stretch reads FNVADMAISCGAVFIILDGFI.

This sequence belongs to the peptidase A8 family.

Its subcellular location is the cell inner membrane. It carries out the reaction Release of signal peptides from bacterial membrane prolipoproteins. Hydrolyzes -Xaa-Yaa-Zaa-|-(S,diacylglyceryl)Cys-, in which Xaa is hydrophobic (preferably Leu), and Yaa (Ala or Ser) and Zaa (Gly or Ala) have small, neutral side chains.. Its pathway is protein modification; lipoprotein biosynthesis (signal peptide cleavage). Its function is as follows. This protein specifically catalyzes the removal of signal peptides from prolipoproteins. The protein is Lipoprotein signal peptidase of Tolumonas auensis (strain DSM 9187 / NBRC 110442 / TA 4).